Reading from the N-terminus, the 542-residue chain is Coiled-coil domain-containing protein 60 (542 aa).

Residues 70-97 adopt a coiled-coil conformation; it reads TMLQEETAFKKHQQHLKKLQEEELNKFQ. 2 disordered regions span residues 228-284 and 334-358; these read ATRK…EEEV and QTTH…TQKK. Low complexity-rich tracts occupy residues 245-261 and 342-351; these read SGGS…NPSS and RSSTTSGESH.

The sequence is that of Coiled-coil domain-containing protein 60 (Ccdc60) from Rattus norvegicus (Rat).